The primary structure comprises 476 residues: Protein DETOXIFICATION 3 (476 aa).

A run of 12 helical transmembrane segments spans residues 35–55 (AAPM…SVMV), 66–86 (GVAL…FGLA), 117–137 (IPIC…LISL), 146–166 (VAGS…FFIP), 185–205 (LTTL…FGLG), 208–228 (GAAM…SCYV), 260–280 (AAMV…SGLL), 289–309 (VLSI…GVAA), 331–351 (VLAG…LLFT), 370–390 (VANL…TAVL), 402–422 (IGAL…GVYL), and 433–453 (LWCG…FVTA).

It belongs to the multi antimicrobial extrusion (MATE) (TC 2.A.66.1) family.

Its subcellular location is the membrane. In Arabidopsis thaliana (Mouse-ear cress), this protein is Protein DETOXIFICATION 3.